The following is a 96-amino-acid chain: UPF0235 protein YggU (96 aa).

Belongs to the UPF0235 family.

This is UPF0235 protein YggU from Escherichia coli (strain K12 / MC4100 / BW2952).